The chain runs to 495 residues: Adenosylhomocysteinase (495 aa).

The substrate site is built by T71, D156, and E218. Residue 219–221 (TTT) coordinates NAD(+). 2 residues coordinate substrate: K248 and D252. NAD(+)-binding positions include N253, 282–287 (GYGDVG), E305, N340, 361–363 (IGH), and N409.

The protein belongs to the adenosylhomocysteinase family. Requires NAD(+) as cofactor.

Its subcellular location is the cytoplasm. The catalysed reaction is S-adenosyl-L-homocysteine + H2O = L-homocysteine + adenosine. The protein operates within amino-acid biosynthesis; L-homocysteine biosynthesis; L-homocysteine from S-adenosyl-L-homocysteine: step 1/1. Functionally, may play a key role in the regulation of the intracellular concentration of adenosylhomocysteine. The chain is Adenosylhomocysteinase from Mycobacterium tuberculosis (strain ATCC 25177 / H37Ra).